A 97-amino-acid chain; its full sequence is Co-chaperonin GroES (97 aa).

This sequence belongs to the GroES chaperonin family. Heptamer of 7 subunits arranged in a ring. Interacts with the chaperonin GroEL.

Its subcellular location is the cytoplasm. Together with the chaperonin GroEL, plays an essential role in assisting protein folding. The GroEL-GroES system forms a nano-cage that allows encapsulation of the non-native substrate proteins and provides a physical environment optimized to promote and accelerate protein folding. GroES binds to the apical surface of the GroEL ring, thereby capping the opening of the GroEL channel. This is Co-chaperonin GroES from Buchnera aphidicola subsp. Pterocomma populeum.